The sequence spans 310 residues: Vomeronasal type-1 receptor 3 (310 aa).

Residues 1 to 5 (MASKD) lie on the Extracellular side of the membrane. The chain crosses the membrane as a helical span at residues 6–26 (FAIGMILSQIMVGFLGNFFLL). Over 27–50 (YHYSFLHFTRGMLQSTDLTLKHLT) the chain is Cytoplasmic. The chain crosses the membrane as a helical span at residues 51 to 71 (IANSLVILSKGIPQTMAAFGL). The Extracellular segment spans residues 72–91 (KDSLSDIGCKFVFYVHRVGR). Residues 92–112 (AVCTGNACLLSVFQVITISSS) traverse the membrane as a helical segment. Topologically, residues 113–129 (EFRWAELKLHAHKYIRS) are cytoplasmic. A helical transmembrane segment spans residues 130 to 150 (FILVLCWILNTLVNITVPLHV). The Extracellular portion of the chain corresponds to 151–186 (TGKWNSINSTKTNDYGYCSGGSRSRIPHSLHIVLLS). The N-linked (GlcNAc...) asparagine glycan is linked to asparagine 158. A helical membrane pass occupies residues 187–207 (SLDVLCLGLMTLASGSMVFIL). Over 208–235 (HRLKQQVQHIHGTNLSPRSSPESRVTQS) the chain is Cytoplasmic. A helical transmembrane segment spans residues 236-258 (ILVLVSTLCYFTRSPPSLHMSLF). Over 259 to 263 (PNPSW) the chain is Extracellular. Residues 264 to 284 (WPLNASALITACFPTVSPFVL) form a helical membrane-spanning segment. Residues 285–310 (MSRHPRIPRLGSACCGRNPQFPKLVR) lie on the Cytoplasmic side of the membrane.

It belongs to the G-protein coupled receptor 1 family.

The protein resides in the cell membrane. Its function is as follows. Putative pheromone receptor. This Pan troglodytes (Chimpanzee) protein is Vomeronasal type-1 receptor 3 (VN1R3).